The primary structure comprises 360 residues: Magnesium transporter NIPA2 (360 aa).

Residues 1 to 9 (MSQGRGKYD) lie on the Extracellular side of the membrane. The helical transmembrane segment at 10–30 (FYIGLGLAMSSSIFIGGSFIL) threads the bilayer. The Cytoplasmic segment spans residues 31–56 (KKKGLLRLARKGSMRAGQGGHAYLKE). The chain crosses the membrane as a helical span at residues 57 to 77 (WLWWAGLLSMGAGEVANFAAY). A topological domain (extracellular) is located at residue Ala-78. Residues 79–99 (FAPATLVTPLGALSVLVSAIL) traverse the membrane as a helical segment. Topologically, residues 100–107 (SSYFLNER) are cytoplasmic. A helical membrane pass occupies residues 108–128 (LNLHGKIGCLLSILGSTVMVI). Over 129 to 149 (HAPKEEEIETLNEMSHKLGDP) the chain is Extracellular. The helical transmembrane segment at 150–170 (GFVVFATLVVIVALILIFVVG) threads the bilayer. Residues 171-175 (PRHGQ) lie on the Cytoplasmic side of the membrane. Residues 176–196 (TNILVYITICSVIGAFSVSCV) form a helical membrane-spanning segment. Residues 197-215 (KGLGIAIKELFAGKPVLRH) are Extracellular-facing. The chain crosses the membrane as a helical span at residues 216 to 236 (PLAWILLLSLIVCVSTQINYL). Over 237-246 (NRALDIFNTS) the chain is Cytoplasmic. The chain crosses the membrane as a helical span at residues 247–267 (IVTPIYYVFFTTSVLTCSAIL). Over 268-278 (FKEWQDMPVDD) the chain is Extracellular. The helical transmembrane segment at 279-299 (VIGTLSGFFTIIVGIFLLHAF) threads the bilayer. The Cytoplasmic portion of the chain corresponds to 300 to 360 (KDVSFSLASL…SRRNGNLTAF (61 aa)).

The protein belongs to the NIPA family. In terms of tissue distribution, widely expressed.

The protein localises to the cell membrane. It localises to the early endosome. The catalysed reaction is Mg(2+)(in) = Mg(2+)(out). Its function is as follows. Acts as a selective Mg(2+) transporter. The sequence is that of Magnesium transporter NIPA2 (NIPA2) from Homo sapiens (Human).